The following is a 265-amino-acid chain: H-2 class II histocompatibility antigen, A-Q beta chain (265 aa).

Positions 1–27 (MALQIPSLLLSAAVVVLMVLSSPRTEG) are cleaved as a signal peptide. The interval 28 to 122 (GNSERHFVAQ…VETHTSLRRL (95 aa)) is beta-1. Over 28–227 (GNSERHFVAQ…AQSESARSKM (200 aa)) the chain is Extracellular. Intrachain disulfides connect cysteine 42–cysteine 106 and cysteine 145–cysteine 201. N-linked (GlcNAc...) asparagine glycosylation occurs at asparagine 46. The interval 123–217 (EQPNVAISLS…LKSPITVEWR (95 aa)) is beta-2. Residues 125–213 (PNVAISLSRT…EHPSLKSPIT (89 aa)) form the Ig-like C1-type domain. Residues 218 to 227 (AQSESARSKM) are connecting peptide. A helical transmembrane segment spans residues 228–247 (LSGIGGCVLGVIFLGLGLFI). Residues 248-265 (RHRSQKGPRGPPPAGLLQ) lie on the Cytoplasmic side of the membrane.

It belongs to the MHC class II family. Post-translationally, ubiquitinated in immature dendritic cells leading to down-regulation of MHC class II.

Its subcellular location is the membrane. The protein is H-2 class II histocompatibility antigen, A-Q beta chain (H2-Ab1) of Mus musculus (Mouse).